Reading from the N-terminus, the 250-residue chain is 5-oxoprolinase subunit A (250 aa).

Belongs to the LamB/PxpA family. As to quaternary structure, forms a complex composed of PxpA, PxpB and PxpC.

It carries out the reaction 5-oxo-L-proline + ATP + 2 H2O = L-glutamate + ADP + phosphate + H(+). In terms of biological role, catalyzes the cleavage of 5-oxoproline to form L-glutamate coupled to the hydrolysis of ATP to ADP and inorganic phosphate. This Nocardia farcinica (strain IFM 10152) protein is 5-oxoprolinase subunit A.